Consider the following 449-residue polypeptide: Glucose-6-phosphate isomerase (449 aa).

Glutamate 291 functions as the Proton donor in the catalytic mechanism. Residues histidine 312 and lysine 426 contribute to the active site.

This sequence belongs to the GPI family.

Its subcellular location is the cytoplasm. The enzyme catalyses alpha-D-glucose 6-phosphate = beta-D-fructose 6-phosphate. It participates in carbohydrate biosynthesis; gluconeogenesis. It functions in the pathway carbohydrate degradation; glycolysis; D-glyceraldehyde 3-phosphate and glycerone phosphate from D-glucose: step 2/4. Functionally, catalyzes the reversible isomerization of glucose-6-phosphate to fructose-6-phosphate. The protein is Glucose-6-phosphate isomerase of Streptococcus pneumoniae serotype 19F (strain G54).